The chain runs to 223 residues: Uridylate kinase (223 aa).

9–10 lines the ATP pocket; the sequence is GS. UMP is bound at residue Gly42. The ATP site is built by Gly43 and Arg47. Residues Asp64 and 112-118 each bind UMP; that span reads VSPGQTT. Residues Thr138, Tyr144, and Asp147 each contribute to the ATP site.

The protein belongs to the UMP kinase family. As to quaternary structure, homohexamer.

It localises to the cytoplasm. It carries out the reaction UMP + ATP = UDP + ADP. Its pathway is pyrimidine metabolism; CTP biosynthesis via de novo pathway; UDP from UMP (UMPK route): step 1/1. With respect to regulation, inhibited by UTP. Its function is as follows. Catalyzes the reversible phosphorylation of UMP to UDP. This Methanothrix thermoacetophila (strain DSM 6194 / JCM 14653 / NBRC 101360 / PT) (Methanosaeta thermophila) protein is Uridylate kinase.